The sequence spans 105 residues: Intermembrane phospholipid transport system binding protein MlaB (105 aa).

The 102-residue stretch at 4 to 105 (WDLQKNNDKI…GLSDWIANFI (102 aa)) folds into the STAS domain.

As to quaternary structure, the complex is composed of two ATP-binding proteins (MlaF), two transmembrane proteins (MlaE), two cytoplasmic solute-binding proteins (MlaB) and six periplasmic solute-binding proteins (MlaD).

The protein resides in the cytoplasm. Part of the ABC transporter complex MlaFEDB, which is involved in a phospholipid transport pathway that maintains lipid asymmetry in the outer membrane by retrograde trafficking of phospholipids from the outer membrane to the inner membrane. MlaB plays critical roles in both the assembly and activity of the complex. May act by modulating MlaF structure and stability. This chain is Intermembrane phospholipid transport system binding protein MlaB, found in Haemophilus influenzae (strain ATCC 51907 / DSM 11121 / KW20 / Rd).